Here is a 294-residue protein sequence, read N- to C-terminus: uncharacterized protein (294 aa).

This is an uncharacterized protein from Methanocaldococcus jannaschii (strain ATCC 43067 / DSM 2661 / JAL-1 / JCM 10045 / NBRC 100440) (Methanococcus jannaschii).